The sequence spans 388 residues: Homoserine O-acetyltransferase (388 aa).

The AB hydrolase-1 domain maps to 55 to 354 (PIVLIEHALT…PTGHDGFLIE (300 aa)). Serine 150 acts as the Nucleophile in catalysis. Arginine 220 contacts substrate. Residues aspartate 318 and histidine 348 contribute to the active site. Aspartate 349 lines the substrate pocket.

The protein belongs to the AB hydrolase superfamily. MetX family. As to quaternary structure, homodimer.

The protein localises to the cytoplasm. It carries out the reaction L-homoserine + acetyl-CoA = O-acetyl-L-homoserine + CoA. Its pathway is amino-acid biosynthesis; L-methionine biosynthesis via de novo pathway; O-acetyl-L-homoserine from L-homoserine: step 1/1. Functionally, transfers an acetyl group from acetyl-CoA to L-homoserine, forming acetyl-L-homoserine. This chain is Homoserine O-acetyltransferase, found in Corynebacterium urealyticum (strain ATCC 43042 / DSM 7109).